Consider the following 303-residue polypeptide: Shikimate kinase 1, chloroplastic (303 aa).

Residues 1–66 (MEAAITQRIQ…QRRAVSPAVS (66 aa)) constitute a chloroplast transit peptide. 109–116 (GMMGSGKT) contacts ATP. Mg(2+) is bound at residue Thr-116. Residues Asp-134, Arg-159, and Gly-181 each coordinate substrate. Residue Arg-220 coordinates ATP.

It belongs to the shikimate kinase family. In terms of assembly, homodimer. The cofactor is Mg(2+).

It localises to the plastid. The protein resides in the chloroplast. It carries out the reaction shikimate + ATP = 3-phosphoshikimate + ADP + H(+). Its pathway is metabolic intermediate biosynthesis; chorismate biosynthesis; chorismate from D-erythrose 4-phosphate and phosphoenolpyruvate: step 5/7. In terms of biological role, catalyzes the specific phosphorylation of the 3-hydroxyl group of shikimic acid using ATP as a cosubstrate. The polypeptide is Shikimate kinase 1, chloroplastic (SK1) (Arabidopsis thaliana (Mouse-ear cress)).